The sequence spans 594 residues: UvrABC system protein C (594 aa).

In terms of domain architecture, GIY-YIG spans 13-99 (SSSGVYQYFD…IKQLKPKYNI (87 aa)). Positions 205–240 (DRLIKELELKMERLSSNLRFEEALIYRDRIAKIQKI) constitute a UVR domain.

The protein belongs to the UvrC family. As to quaternary structure, interacts with UvrB in an incision complex.

It localises to the cytoplasm. Functionally, the UvrABC repair system catalyzes the recognition and processing of DNA lesions. UvrC both incises the 5' and 3' sides of the lesion. The N-terminal half is responsible for the 3' incision and the C-terminal half is responsible for the 5' incision. This Helicobacter pylori (strain J99 / ATCC 700824) (Campylobacter pylori J99) protein is UvrABC system protein C.